A 165-amino-acid polypeptide reads, in one-letter code: Large ribosomal subunit protein uL10 (165 aa).

Belongs to the universal ribosomal protein uL10 family. As to quaternary structure, part of the ribosomal stalk of the 50S ribosomal subunit. The N-terminus interacts with L11 and the large rRNA to form the base of the stalk. The C-terminus forms an elongated spine to which L12 dimers bind in a sequential fashion forming a multimeric L10(L12)X complex.

Its function is as follows. Forms part of the ribosomal stalk, playing a central role in the interaction of the ribosome with GTP-bound translation factors. This Burkholderia ambifaria (strain MC40-6) protein is Large ribosomal subunit protein uL10.